The following is a 99-amino-acid chain: RNA-binding protein Hfq (99 aa).

The Sm domain occupies 9–68 (DPFLNALRRERVPVSIYLVNGIKLQGQIESFDQFVILLKNTVSQMVYKHAISTVVPSRPV). Residues 64-99 (PSRPVSHHSNNPGGSNNYHGSNTTAQQQSQDADDAE) are disordered. The span at 70–93 (HHSNNPGGSNNYHGSNTTAQQQSQ) shows a compositional bias: low complexity.

It belongs to the Hfq family. In terms of assembly, homohexamer.

RNA chaperone that binds small regulatory RNA (sRNAs) and mRNAs to facilitate mRNA translational regulation in response to envelope stress, environmental stress and changes in metabolite concentrations. Also binds with high specificity to tRNAs. In Pectobacterium atrosepticum (strain SCRI 1043 / ATCC BAA-672) (Erwinia carotovora subsp. atroseptica), this protein is RNA-binding protein Hfq.